The chain runs to 379 residues: Histidinol-phosphate aminotransferase (379 aa).

Lys236 carries the post-translational modification N6-(pyridoxal phosphate)lysine.

It belongs to the class-II pyridoxal-phosphate-dependent aminotransferase family. Histidinol-phosphate aminotransferase subfamily. In terms of assembly, homodimer. It depends on pyridoxal 5'-phosphate as a cofactor.

The catalysed reaction is L-histidinol phosphate + 2-oxoglutarate = 3-(imidazol-4-yl)-2-oxopropyl phosphate + L-glutamate. It participates in amino-acid biosynthesis; L-histidine biosynthesis; L-histidine from 5-phospho-alpha-D-ribose 1-diphosphate: step 7/9. This Desulfotalea psychrophila (strain LSv54 / DSM 12343) protein is Histidinol-phosphate aminotransferase.